We begin with the raw amino-acid sequence, 1170 residues long: Chromosome partition protein Smc (1170 aa).

32–39 (PNGCGKSN) contacts ATP. 3 coiled-coil regions span residues 169–215 (GVSK…AVVA), 245–365 (DRQR…DAAA), and 401–508 (EAAH…TQGK). An SMC hinge domain is found at 520–623 (ALPRLWKKLH…VADDLAQALA (104 aa)). 2 coiled-coil regions span residues 664–944 (QEIE…KEKL) and 983–1020 (ERKV…LQAT).

It belongs to the SMC family. As to quaternary structure, homodimer.

It localises to the cytoplasm. Its function is as follows. Required for chromosome condensation and partitioning. The polypeptide is Chromosome partition protein Smc (Burkholderia pseudomallei (strain 1710b)).